Reading from the N-terminus, the 396-residue chain is Elongation factor Tu (396 aa).

One can recognise a tr-type G domain in the interval 10-205 (KPHVNIGTIG…ACDDNIPDPV (196 aa)). The G1 stretch occupies residues 19–26 (GHVDHGKT). Position 19–26 (19–26 (GHVDHGKT)) interacts with GTP. Thr26 serves as a coordination point for Mg(2+). Positions 62–66 (GITIN) are G2. The interval 83 to 86 (DAPG) is G3. Residues 83-87 (DAPGH) and 138-141 (NKCD) each bind GTP. Positions 138–141 (NKCD) are G4. The G5 stretch occupies residues 175–177 (SAL).

This sequence belongs to the TRAFAC class translation factor GTPase superfamily. Classic translation factor GTPase family. EF-Tu/EF-1A subfamily. As to quaternary structure, monomer.

It is found in the cytoplasm. It carries out the reaction GTP + H2O = GDP + phosphate + H(+). Its function is as follows. GTP hydrolase that promotes the GTP-dependent binding of aminoacyl-tRNA to the A-site of ribosomes during protein biosynthesis. The sequence is that of Elongation factor Tu from Corynebacterium efficiens (strain DSM 44549 / YS-314 / AJ 12310 / JCM 11189 / NBRC 100395).